We begin with the raw amino-acid sequence, 231 residues long: Ribonuclease 3 (231 aa).

Positions 3–130 (MHEFFENFGI…VTAAIYLDQT (128 aa)) constitute an RNase III domain. Residue Glu-43 coordinates Mg(2+). The active site involves Asp-47. Positions 116 and 119 each coordinate Mg(2+). The active site involves Glu-119. The DRBM domain occupies 157-228 (DYKSELQEII…AKDCLNKLKK (72 aa)).

It belongs to the ribonuclease III family. In terms of assembly, homodimer. The cofactor is Mg(2+).

Its subcellular location is the cytoplasm. The enzyme catalyses Endonucleolytic cleavage to 5'-phosphomonoester.. Digests double-stranded RNA. Involved in the processing of primary rRNA transcript to yield the immediate precursors to the large and small rRNAs (23S and 16S). Processes some mRNAs, and tRNAs when they are encoded in the rRNA operon. Processes pre-crRNA and tracrRNA of type II CRISPR loci if present in the organism. This Mesoplasma florum (strain ATCC 33453 / NBRC 100688 / NCTC 11704 / L1) (Acholeplasma florum) protein is Ribonuclease 3.